We begin with the raw amino-acid sequence, 505 residues long: Maturase K (505 aa).

This sequence belongs to the intron maturase 2 family. MatK subfamily.

The protein localises to the plastid. The protein resides in the chloroplast. Functionally, usually encoded in the trnK tRNA gene intron. Probably assists in splicing its own and other chloroplast group II introns. In Illicium oligandrum (Star anise), this protein is Maturase K.